Reading from the N-terminus, the 265-residue chain is Type 1 encapsulin shell protein (265 aa).

Belongs to the encapsulin family. Family 1 subfamily. In terms of assembly, multimeric. The encapsulin nanocompartment is formed by 60 subunits. Monomers form pentamers which assemble to form shells. There are 12 pores where the pentamers meet as well as 3-fold axis channels and dimer channels; none are larger than 3-4 Angstroms in diameter. The N-terminus of the protein is inside the shell, the C-terminus is outside. The initiator methionine is partially removed. When isolated from culture filtrate isoelectric focusing gives 3 bands, none of which are glycosylated.

The protein localises to the encapsulin nanocompartment. The protein resides in the secreted. It localises to the cell membrane. In terms of biological role, shell component of a type 1 encapsulin nanocompartment in situ; its cargo protects against oxidative stress at low pH. In situ and in E.coli assembles into proteinaceous shells about 22 nm in diameter with 2.5 nm thick walls. Cargo proteins are targeted to the interior via their C-terminal extensions; empty intact shells can be isolated in E.coli in the absence of cargo protein. There are at least 4 possible cargo proteins, DyP (encoded in the same locus), FolB, BfrB and Rv1762c; DyP and Rv1762c have been identified in vivo. Probably involved in protection against oxidative damage from the host immune response. A T-cell antigen found in bacterial culture cell filtrates, stimulates mouse immune response. Does not have detectable bacteriocin activity. The sequence is that of Type 1 encapsulin shell protein from Mycobacterium tuberculosis (strain ATCC 25618 / H37Rv).